The sequence spans 472 residues: MIQRRRPVPFELGPVHFIGIGGIGMSGIAEIMLRIGYTVQGSDAKASANTERLEKLGARIFIGHDAAHVEGASAIVYSTAVKADNPEMVAGRDKRLPLVRRAEMLAELMRLQFSVAVGGTHGKTTTTSMVAALLDAGALDPTVVNGGIINAYGTNAKVGEGDWIVVEADESDGSFLKLKSTVAIVTNIDAEHLDHWGTFDAVKKGFQDFIENIPFYGFAAVCTDHPEVQALTARIENRRLVTYGTNPQAEVRVSNIQMGPEGAQFDILVSPLSGDLVLYEGLKMPMAGHHNVLNATAAVAVARELGVDADAIRAGLAGFGGVKRRFTTTGVANGVRIVDDYGHHPVEIAAVLKAARAVSTGKVIAVVQPHRFTRLRDLMTEFSSCFNDADTVIVADVYTAGEAPIEGVDRDHLVEGLKKFGHRRALALESPAALPALIAAEAQSGDLVVLLGAGDITNWSYALPGQLEALAK.

ATP is bound at residue 119-125 (GTHGKTT).

Belongs to the MurCDEF family.

It localises to the cytoplasm. It carries out the reaction UDP-N-acetyl-alpha-D-muramate + L-alanine + ATP = UDP-N-acetyl-alpha-D-muramoyl-L-alanine + ADP + phosphate + H(+). Its pathway is cell wall biogenesis; peptidoglycan biosynthesis. In terms of biological role, cell wall formation. The sequence is that of UDP-N-acetylmuramate--L-alanine ligase from Caulobacter sp. (strain K31).